The chain runs to 152 residues: Deoxyuridine 5'-triphosphate nucleotidohydrolase (152 aa).

Substrate is bound by residues 71 to 73, N84, 88 to 90, and M98; these read RSG and LID.

It belongs to the dUTPase family. Requires Mg(2+) as cofactor.

The catalysed reaction is dUTP + H2O = dUMP + diphosphate + H(+). It participates in pyrimidine metabolism; dUMP biosynthesis; dUMP from dCTP (dUTP route): step 2/2. In terms of biological role, this enzyme is involved in nucleotide metabolism: it produces dUMP, the immediate precursor of thymidine nucleotides and it decreases the intracellular concentration of dUTP so that uracil cannot be incorporated into DNA. The chain is Deoxyuridine 5'-triphosphate nucleotidohydrolase from Klebsiella pneumoniae subsp. pneumoniae (strain ATCC 700721 / MGH 78578).